Reading from the N-terminus, the 65-residue chain is Small ribosomal subunit protein bS21 (65 aa).

It belongs to the bacterial ribosomal protein bS21 family.

The polypeptide is Small ribosomal subunit protein bS21 (Chlorobium chlorochromatii (strain CaD3)).